The chain runs to 952 residues: Disintegrin and metalloproteinase domain-containing protein adm-2 (952 aa).

Residues 1-672 (MTDTLDLKLS…NEAYRFRGIT (672 aa)) lie on the Extracellular side of the membrane. N-linked (GlcNAc...) asparagine glycans are attached at residues Asn125 and Asn301. Residues 177 to 373 (RFVELALVAD…GIDLCLFNEP (197 aa)) enclose the Peptidase M12B domain. 3 disulfide bridges follow: Cys287–Cys368, Cys330–Cys352, and Cys332–Cys337. Zn(2+) is bound at residue His312. The active site involves Glu313. His316 and His322 together coordinate Zn(2+). The Disintegrin domain occupies 379 to 466 (DAKCGNGIVE…DCPADFFVQN (88 aa)). An N-linked (GlcNAc...) asparagine glycan is attached at Asn406. 4 disulfide bridges follow: Cys438/Cys458, Cys624/Cys634, Cys628/Cys640, and Cys642/Cys651. The EGF-like domain occupies 620–652 (VTAQCLDNCNFRGVCNNVGNCHCERGFGGIACE). Residues 673 to 693 (LSSTFLVFFCLFGIFIGGLCV) form a helical membrane-spanning segment. At 694–952 (YYRVKRKRNL…AAIFDQKLKK (259 aa)) the chain is on the cytoplasmic side. 2 disordered regions span residues 778–809 (IPMV…ERAT) and 829–938 (SFNT…EKVD). 2 stretches are compositionally biased toward basic and acidic residues: residues 798–809 (AEKEEQNQERAT) and 849–873 (PSDD…DRLN). Positions 905–914 (QAPPPPPPAH) are enriched in pro residues. Positions 925–938 (KVSEDAAATEEKVD) are enriched in basic and acidic residues.

Requires Zn(2+) as cofactor. Expressed in hyp7 large epidermal syncytium (punctate distribution), seam cell syncytia, anterior epidermis, neurons located in the head, tail and central body, proximal oogenic cells (levels increasing in maturing oocytes) and myoepithelial cells of the spermatheca (at protein level). Not detected in mature sperm cells.

It localises to the cell membrane. The protein resides in the endosome membrane. It is found in the lysosome membrane. Functionally, metalloprotease that cleaves and releases a number of molecules. Negative regulator of lrp-1 protein levels, potentially by influencing its endosomal trafficking. Involved in regulating the molting process. The protein is Disintegrin and metalloproteinase domain-containing protein adm-2 of Caenorhabditis elegans.